The primary structure comprises 193 residues: ATP synthase subunit b (193 aa).

Residues 24–44 form a helical membrane-spanning segment; that stretch reads PLAELIVGLLAFGLLVGFFFW.

The protein belongs to the ATPase B chain family. In terms of assembly, F-type ATPases have 2 components, F(1) - the catalytic core - and F(0) - the membrane proton channel. F(1) has five subunits: alpha(3), beta(3), gamma(1), delta(1), epsilon(1). F(0) has three main subunits: a(1), b(2) and c(10-14). The alpha and beta chains form an alternating ring which encloses part of the gamma chain. F(1) is attached to F(0) by a central stalk formed by the gamma and epsilon chains, while a peripheral stalk is formed by the delta and b chains.

Its subcellular location is the cell membrane. Its function is as follows. F(1)F(0) ATP synthase produces ATP from ADP in the presence of a proton or sodium gradient. F-type ATPases consist of two structural domains, F(1) containing the extramembraneous catalytic core and F(0) containing the membrane proton channel, linked together by a central stalk and a peripheral stalk. During catalysis, ATP synthesis in the catalytic domain of F(1) is coupled via a rotary mechanism of the central stalk subunits to proton translocation. In terms of biological role, component of the F(0) channel, it forms part of the peripheral stalk, linking F(1) to F(0). The chain is ATP synthase subunit b from Parafrankia sp. (strain EAN1pec).